The chain runs to 551 residues: Adenine deaminase (551 aa).

The protein belongs to the metallo-dependent hydrolases superfamily. Adenine deaminase family. Requires Mn(2+) as cofactor.

It catalyses the reaction adenine + H2O + H(+) = hypoxanthine + NH4(+). The protein is Adenine deaminase of Methanosarcina barkeri (strain Fusaro / DSM 804).